The primary structure comprises 466 residues: tRNA modification GTPase MnmE (466 aa).

Residues R24, E85, and K128 each contribute to the (6S)-5-formyl-5,6,7,8-tetrahydrofolate site. Residues 224–384 (GLNIVLAGQP…LRTELLHLVG (161 aa)) form the TrmE-type G domain. A K(+)-binding site is contributed by N234. GTP contacts are provided by residues 234–239 (NVGKSS), 253–259 (TPIAGTT), and 278–281 (DTAG). Mg(2+) is bound at residue S238. K(+) contacts are provided by T253, I255, and T258. Residue T259 participates in Mg(2+) binding. K466 contributes to the (6S)-5-formyl-5,6,7,8-tetrahydrofolate binding site.

It belongs to the TRAFAC class TrmE-Era-EngA-EngB-Septin-like GTPase superfamily. TrmE GTPase family. As to quaternary structure, homodimer. Heterotetramer of two MnmE and two MnmG subunits. Requires K(+) as cofactor.

It is found in the cytoplasm. Functionally, exhibits a very high intrinsic GTPase hydrolysis rate. Involved in the addition of a carboxymethylaminomethyl (cmnm) group at the wobble position (U34) of certain tRNAs, forming tRNA-cmnm(5)s(2)U34. The protein is tRNA modification GTPase MnmE of Herminiimonas arsenicoxydans.